We begin with the raw amino-acid sequence, 765 residues long: MATLLIDNYDSFTYNVYQYLCSQGADVVVYRNDKITVDEIVKLNPVNIVISPGPGHPSHDAGVSRDVISYFAGKLPILGICMGEQCIFEVFGGTVSYAGDILHGKTSTIKHDNRGLFKNVPQDNQVTRYHSLAGMPSTLPEVLEVTATTDDGVIMGVRHKKYTVEGVQFHPESILCEHGHTMISNFLSLRGGNWDENPAAGVLAQKVPAAATEKAAQEASPAISTPPTCSTILSRIYAQRVKDVQAAKEVPGQSQADLQKLLNLHIAPPLRDVVNRLKESSPALMAEVKRASPSKGNIDITVNAAEQALQYALAGASVISVLTEPKWFRGSLNDLRQVREACPLLPNRPCILRKTFLLDTYQILEARLYGADTVLLIVAMMSDEDLRELYQYSVSLGMEPLVEVNNAEEMARANAVGAKLIGVNNRGLHSFDVDMETTSRLAEMVPEGTILCALSGISTRADVETYVSQGVHGLLVGEALMRAWNLKEFVAELLGYKKKDPVPHTPVSRQVQVKICGISSVEAAVEAATAGADLVGLIFAEKSKRQVTVAKAREIVDALHKLPTRSSQLPVKSQKSIDWFDVQTEMVEQRVPWRPLVVGVFVNQSIEYMSQVAVEAGLDLIQLHGTESAEIARFLPVPVIKAFHMDASSFHAGQIPYVTQPGNNQLLLLDAKVPSLPMDRQGGLGQKFDWTIAQDIVNVKRPGCSKEQTFPVILAGGLDPSNISEAIQQVRPWAVDVSSGVETDGKKDLKKIRAFVEKAKSINLQ.

The region spanning 2–196 is the Glutamine amidotransferase type-1 domain; that stretch reads ATLLIDNYDS…LSLRGGNWDE (195 aa). 53-55 provides a ligand contact to L-glutamine; sequence GPG. Residue Cys81 is the Nucleophile; for GATase activity of the active site. L-glutamine contacts are provided by residues Gln85 and 131–132; that span reads SL. Active-site for GATase activity residues include His170 and Glu172. The interval 231–494 is indole-3-glycerol phosphate synthase; sequence TILSRIYAQR…NLKEFVAELL (264 aa). The N-(5'-phosphoribosyl)anthranilate isomerase stretch occupies residues 512–765; sequence QVKICGISSV…VEKAKSINLQ (254 aa).

The enzyme catalyses N-(5-phospho-beta-D-ribosyl)anthranilate = 1-(2-carboxyphenylamino)-1-deoxy-D-ribulose 5-phosphate. The catalysed reaction is 1-(2-carboxyphenylamino)-1-deoxy-D-ribulose 5-phosphate + H(+) = (1S,2R)-1-C-(indol-3-yl)glycerol 3-phosphate + CO2 + H2O. It catalyses the reaction chorismate + L-glutamine = anthranilate + pyruvate + L-glutamate + H(+). It participates in amino-acid biosynthesis; L-tryptophan biosynthesis; L-tryptophan from chorismate: step 1/5. Its pathway is amino-acid biosynthesis; L-tryptophan biosynthesis; L-tryptophan from chorismate: step 3/5. The protein operates within amino-acid biosynthesis; L-tryptophan biosynthesis; L-tryptophan from chorismate: step 4/5. Trifunctional enzyme bearing the Gln amidotransferase (GATase) domain of anthranilate synthase, indole-glycerolphosphate synthase, and phosphoribosylanthranilate isomerase activities. This is Multifunctional tryptophan biosynthesis protein (trp1) from Phycomyces blakesleeanus.